The sequence spans 247 residues: Ribosomal RNA large subunit methyltransferase E (247 aa).

Positions M1–A21 are disordered. The span at S8–P17 shows a compositional bias: basic and acidic residues. G80, W82, D108, D124, and D153 together coordinate S-adenosyl-L-methionine. Residue K193 is the Proton acceptor of the active site.

Belongs to the class I-like SAM-binding methyltransferase superfamily. RNA methyltransferase RlmE family.

It is found in the cytoplasm. The enzyme catalyses uridine(2552) in 23S rRNA + S-adenosyl-L-methionine = 2'-O-methyluridine(2552) in 23S rRNA + S-adenosyl-L-homocysteine + H(+). Functionally, specifically methylates the uridine in position 2552 of 23S rRNA at the 2'-O position of the ribose in the fully assembled 50S ribosomal subunit. This Polaromonas sp. (strain JS666 / ATCC BAA-500) protein is Ribosomal RNA large subunit methyltransferase E.